The following is a 129-amino-acid chain: NADH-quinone oxidoreductase subunit A (129 aa).

A run of 3 helical transmembrane segments spans residues 9–29, 68–88, and 97–117; these read FPIG…LGLA, LLFI…VLLL, and LGWP…AGLV.

The protein belongs to the complex I subunit 3 family. As to quaternary structure, NDH-1 is composed of 14 different subunits. Subunits NuoA, H, J, K, L, M, N constitute the membrane sector of the complex.

It localises to the cell inner membrane. The catalysed reaction is a quinone + NADH + 5 H(+)(in) = a quinol + NAD(+) + 4 H(+)(out). In terms of biological role, NDH-1 shuttles electrons from NADH, via FMN and iron-sulfur (Fe-S) centers, to quinones in the respiratory chain. The immediate electron acceptor for the enzyme in this species is believed to be ubiquinone. Couples the redox reaction to proton translocation (for every two electrons transferred, four hydrogen ions are translocated across the cytoplasmic membrane), and thus conserves the redox energy in a proton gradient. The chain is NADH-quinone oxidoreductase subunit A from Anaeromyxobacter dehalogenans (strain 2CP-C).